A 130-amino-acid polypeptide reads, in one-letter code: Large ribosomal subunit protein uL14 (130 aa).

This sequence belongs to the universal ribosomal protein uL14 family. Part of the 50S ribosomal subunit. Forms a cluster with proteins L3 and L19. In the 70S ribosome, L14 and L19 interact and together make contacts with the 16S rRNA in bridges B5 and B8.

Functionally, binds to 23S rRNA. Forms part of two intersubunit bridges in the 70S ribosome. This is Large ribosomal subunit protein uL14 from Leptospira biflexa serovar Patoc (strain Patoc 1 / Ames).